The chain runs to 711 residues: Constitutive ornithine decarboxylase (711 aa).

Residue Lys347 is modified to N6-(pyridoxal phosphate)lysine.

Belongs to the Orn/Lys/Arg decarboxylase class-I family. It depends on pyridoxal 5'-phosphate as a cofactor.

It catalyses the reaction L-ornithine + H(+) = putrescine + CO2. It functions in the pathway amine and polyamine biosynthesis; putrescine biosynthesis via L-ornithine pathway; putrescine from L-ornithine: step 1/1. This is Constitutive ornithine decarboxylase (speC) from Escherichia coli (strain K12).